A 265-amino-acid chain; its full sequence is Hydroxyethylthiazole kinase 2 (265 aa).

Methionine 39 is a binding site for substrate. ATP contacts are provided by lysine 115 and threonine 168. Glycine 195 contributes to the substrate binding site.

Belongs to the Thz kinase family. Mg(2+) serves as cofactor.

It carries out the reaction 5-(2-hydroxyethyl)-4-methylthiazole + ATP = 4-methyl-5-(2-phosphooxyethyl)-thiazole + ADP + H(+). The protein operates within cofactor biosynthesis; thiamine diphosphate biosynthesis; 4-methyl-5-(2-phosphoethyl)-thiazole from 5-(2-hydroxyethyl)-4-methylthiazole: step 1/1. In terms of biological role, catalyzes the phosphorylation of the hydroxyl group of 4-methyl-5-beta-hydroxyethylthiazole (THZ). This is Hydroxyethylthiazole kinase 2 from Clostridium botulinum (strain Kyoto / Type A2).